We begin with the raw amino-acid sequence, 437 residues long: Enolase 2 (437 aa).

Residues histidine 160 and glutamate 169 each contribute to the substrate site. Glutamate 212 acts as the Proton donor in catalysis. Positions 247, 296, and 321 each coordinate Mg(2+). Glutamate 296 and aspartate 321 together coordinate substrate. Lysine 346 serves as the catalytic Proton acceptor. Substrate is bound by residues 373–376 and lysine 397; that span reads SHRS.

It belongs to the enolase family. As to quaternary structure, homodimer. Mg(2+) serves as cofactor.

It localises to the cytoplasm. The catalysed reaction is (2R)-2-phosphoglycerate = phosphoenolpyruvate + H2O. It participates in carbohydrate degradation; glycolysis; pyruvate from D-glyceraldehyde 3-phosphate: step 4/5. This is Enolase 2 (ENO2) from Candida glabrata (strain ATCC 2001 / BCRC 20586 / JCM 3761 / NBRC 0622 / NRRL Y-65 / CBS 138) (Yeast).